Here is a 220-residue protein sequence, read N- to C-terminus: MRTELTPIEARVIGCLIEKEVTTPDQYPLSLNALTNACNQKSNREPVMSLSESEVLDAVDQLISRRLVSDESGFNSRVSKYQHRFCNTEFGDLKLSAQEKGIVCCMLLRGPQTPGELRTRTNRLATFADVKEVETVLDKLASEERGQLVVKLPIEPGKRESRYMHQFCGEVDLDAFQGSALMTASSTPQFDDERVAHLEAEVEALKQELAELKSLVNSLL.

The protein belongs to the UPF0502 family.

The sequence is that of UPF0502 protein VV2_0756 from Vibrio vulnificus (strain CMCP6).